The following is a 155-amino-acid chain: Small ribosomal subunit protein uS7c (155 aa).

Belongs to the universal ribosomal protein uS7 family. Part of the 30S ribosomal subunit.

The protein localises to the plastid. Its subcellular location is the chloroplast. One of the primary rRNA binding proteins, it binds directly to 16S rRNA where it nucleates assembly of the head domain of the 30S subunit. This Lactoris fernandeziana protein is Small ribosomal subunit protein uS7c (rps7).